We begin with the raw amino-acid sequence, 353 residues long: Rhodopsin (353 aa).

Over 1–36 the chain is Extracellular; that stretch reads MNGTEGPYFYIPMVNTTGIVRSPYEYPQYYLVNPAA. N-linked (GlcNAc...) asparagine glycans are attached at residues Asn2 and Asn15. Residues 37–61 form a helical membrane-spanning segment; that stretch reads YAALGAYMFLLILLGFPINFLTLYV. The Cytoplasmic portion of the chain corresponds to 62–73; the sequence is TIEHKKLRTPLN. Residues 74–96 form a helical membrane-spanning segment; sequence YILLNLAVANLFMVFGGFTTTMY. Residues 97 to 110 are Extracellular-facing; it reads TSMHGYFVLGRLGC. A disulfide bridge connects residues Cys110 and Cys187. A helical membrane pass occupies residues 111–133; that stretch reads NLEGFFATLGGEIALWSLVVLAV. The 'Ionic lock' involved in activated form stabilization signature appears at 134–136; sequence ERW. Residues 134 to 152 lie on the Cytoplasmic side of the membrane; that stretch reads ERWMVVCKPISNFRFGENH. Residues 153–173 form a helical membrane-spanning segment; that stretch reads AIMGLAFTWVMASACAVPPLV. Topologically, residues 174–202 are extracellular; it reads GWSRYIPEGMQCSCGIDYYTRAEGFNNES. The N-linked (GlcNAc...) asparagine glycan is linked to Asn200. A helical membrane pass occupies residues 203–224; it reads FVIYMFVCHFLIPLVVVFFCYG. Over 225-252 the chain is Cytoplasmic; that stretch reads RLLCAVKEAAAAQQESETTQRAEREVSR. Residues 253–274 form a helical membrane-spanning segment; the sequence is MVVIMVVAFLICWCPYAGVAWY. The Extracellular segment spans residues 275–286; it reads IFTHQGSEFGPL. A helical membrane pass occupies residues 287–308; sequence FMTFPAFFAKSSSIYNPMIYIC. Lys296 is subject to N6-(retinylidene)lysine. At 309–353 the chain is on the cytoplasmic side; it reads MNKQFRHCMITTLCCGKNPFEEEEGASTTSKTEASSVSSSSVSPA. 2 S-palmitoyl cysteine lipidation sites follow: Cys322 and Cys323. The tract at residues 330–353 is disordered; that stretch reads EEEGASTTSKTEASSVSSSSVSPA. The segment covering 334–353 has biased composition (low complexity); the sequence is ASTTSKTEASSVSSSSVSPA.

It belongs to the G-protein coupled receptor 1 family. Opsin subfamily. Post-translationally, phosphorylated on some or all of the serine and threonine residues present in the C-terminal region. In terms of processing, contains one covalently linked retinal chromophore.

It is found in the membrane. It localises to the cell projection. The protein localises to the cilium. The protein resides in the photoreceptor outer segment. Functionally, photoreceptor required for image-forming vision at low light intensity. While most salt water fish species use retinal as chromophore, most freshwater fish use 3-dehydroretinal, or a mixture of retinal and 3-dehydroretinal. Light-induced isomerization of 11-cis to all-trans retinal triggers a conformational change that activates signaling via G-proteins. Subsequent receptor phosphorylation mediates displacement of the bound G-protein alpha subunit by arrestin and terminates signaling. This Mugil cephalus (Flathead mullet) protein is Rhodopsin (rho).